Here is a 225-residue protein sequence, read N- to C-terminus: Ribonuclease 3 (225 aa).

An RNase III domain is found at 7 to 129 (IPRLCRTLGY…IIGAIYLDSD (123 aa)). E42 is a Mg(2+) binding site. Residue D46 is part of the active site. Residues D115 and E118 each coordinate Mg(2+). The active site involves E118. The DRBM domain occupies 155–225 (DPKTLLQEYL…AAQVLELIKK (71 aa)).

The protein belongs to the ribonuclease III family. In terms of assembly, homodimer. It depends on Mg(2+) as a cofactor.

The protein resides in the cytoplasm. The enzyme catalyses Endonucleolytic cleavage to 5'-phosphomonoester.. Digests double-stranded RNA. Involved in the processing of primary rRNA transcript to yield the immediate precursors to the large and small rRNAs (23S and 16S). Processes some mRNAs, and tRNAs when they are encoded in the rRNA operon. Processes pre-crRNA and tracrRNA of type II CRISPR loci if present in the organism. In Shewanella pealeana (strain ATCC 700345 / ANG-SQ1), this protein is Ribonuclease 3.